The chain runs to 121 residues: Small ribosomal subunit protein uS13 (121 aa).

The segment at 99 to 121 (GQRTRTNARTRRGARKTVAGKKK) is disordered. Positions 100–121 (QRTRTNARTRRGARKTVAGKKK) are enriched in basic residues.

This sequence belongs to the universal ribosomal protein uS13 family. In terms of assembly, part of the 30S ribosomal subunit. Forms a loose heterodimer with protein S19. Forms two bridges to the 50S subunit in the 70S ribosome.

Functionally, located at the top of the head of the 30S subunit, it contacts several helices of the 16S rRNA. In the 70S ribosome it contacts the 23S rRNA (bridge B1a) and protein L5 of the 50S subunit (bridge B1b), connecting the 2 subunits; these bridges are implicated in subunit movement. Contacts the tRNAs in the A and P-sites. This is Small ribosomal subunit protein uS13 from Synechococcus sp. (strain RCC307).